Reading from the N-terminus, the 134-residue chain is Small ribosomal subunit protein uS8c (134 aa).

In terms of assembly, component of the chloroplast small ribosomal subunit (SSU). Mature 70S chloroplast ribosomes of higher plants consist of a small (30S) and a large (50S) subunit. The 30S small subunit contains 1 molecule of ribosomal RNA (16S rRNA) and 24 different proteins. The 50S large subunit contains 3 rRNA molecules (23S, 5S and 4.5S rRNA) and 33 different proteins.

It localises to the plastid. The protein localises to the chloroplast. Its function is as follows. Component of the chloroplast ribosome (chloro-ribosome), a dedicated translation machinery responsible for the synthesis of chloroplast genome-encoded proteins, including proteins of the transcription and translation machinery and components of the photosynthetic apparatus. The polypeptide is Small ribosomal subunit protein uS8c (rps8) (Spinacia oleracea (Spinach)).